The sequence spans 2155 residues: Conidial pigment polyketide synthase PfmaE (2155 aa).

Residues 8 to 245 (LLFGDQSLDT…TAIPVYGPYH (238 aa)) are N-terminal acylcarrier protein transacylase domain (SAT). Residues 381–813 (KCKLAIVGMA…GGNTGLLLED (433 aa)) enclose the Ketosynthase family 3 (KS3) domain. Active-site for beta-ketoacyl synthase activity residues include cysteine 553, histidine 688, and histidine 731. The segment at 910–1231 (AFMFTGQGSH…LCTLHSAGLN (322 aa)) is malonyl-CoA:ACP transacylase (MAT) domain. The active-site For acyl/malonyl transferase activity is serine 1001. A product template (PT) domain region spans residues 1293 to 1608 (TTTVQKVVRE…PRKVLNVVLP (316 aa)). The tract at residues 1297-1428 (QKVVREEVKG…CKVFFGDNEE (132 aa)) is N-terminal hotdog fold. The 308-residue stretch at 1297–1604 (QKVVREEVKG…FQAIPRKVLN (308 aa)) folds into the PKS/mFAS DH domain. Histidine 1329 (proton acceptor; for dehydratase activity) is an active-site residue. The tract at residues 1455–1604 (DASKIGRGLA…FQAIPRKVLN (150 aa)) is C-terminal hotdog fold. Aspartate 1516 acts as the Proton donor; for dehydratase activity in catalysis. 2 Carrier domains span residues 1653–1730 (LTKN…AQFE) and 1779–1856 (GNVS…GIED). The residue at position 1690 (serine 1690) is an O-(pantetheine 4'-phosphoryl)serine. The tract at residues 1738–1782 (EENAHSSASSDSADMETESNFTTPSDDSEKDEVKGDAPAADGNVS) is disordered. O-(pantetheine 4'-phosphoryl)serine is present on serine 1816. Positions 1855-1892 (EDKPKRAAPKSAKQEPAKPEPKVQGEAKAHTNPVDNYP) are disordered. Basic and acidic residues predominate over residues 1866–1883 (AKQEPAKPEPKVQGEAKA). The segment at 1911-2041 (QLFMIPDGSG…LGEGDDAEAK (131 aa)) is thioesterase (TE) domain.

It participates in pigment biosynthesis; melanin biosynthesis. Functionally, non-reducing polyketide synthase; part of the gene cluster that mediates the biosynthesis of dihydroxynaphthalene (DHN)-melanin, a bluish-green pigment forming a dark layer in the conidial wall that protects the conidia from UV radiations. The first step of the pathway is the production of the pentaketide 1,3,6,8-tetrahydroxynaphthalene (1,3,6,8-THN or T4HN) by the polyketide synthase PfmaE though condensation of acetyl-CoA with malonyl-CoA. T4HN is not stable and easily oxidizes into the stable form flaviolin. T4HN is also substrate of the hydroxynaphthalene reductase PfmaG to yield scytalone. The scytalone dehydratase PfmaJ then reduces scytalone to 1,3,8-THN. 1,3,8-THN is then substrate of the hydroxynaphthalene reductase PfmaI to yield vermelone. Vermelone is further converted by the multicopper oxidase PfmaD to 1,8-DHN. Finally the laccase PFICI_06862 transforms 1,8-DHN to DHN-melanin. The roles of the 5-oxoprolinase PfmaA and the proline iminopeptidase PfmaB within the cluster have not been elucidated yet. This chain is Conidial pigment polyketide synthase PfmaE, found in Pestalotiopsis fici (strain W106-1 / CGMCC3.15140).